The sequence spans 131 residues: Holo-[acyl-carrier-protein] synthase (131 aa).

Residues D8 and E59 each coordinate Mg(2+).

The protein belongs to the P-Pant transferase superfamily. AcpS family. Mg(2+) serves as cofactor.

It localises to the cytoplasm. It catalyses the reaction apo-[ACP] + CoA = holo-[ACP] + adenosine 3',5'-bisphosphate + H(+). Functionally, transfers the 4'-phosphopantetheine moiety from coenzyme A to a Ser of acyl-carrier-protein. In Rickettsia rickettsii (strain Sheila Smith), this protein is Holo-[acyl-carrier-protein] synthase.